A 420-amino-acid chain; its full sequence is Glucose-1-phosphate adenylyltransferase (420 aa).

Residues Tyr-107, Gly-172, 187–188 (EK), and Ser-205 each bind alpha-D-glucose 1-phosphate.

It belongs to the bacterial/plant glucose-1-phosphate adenylyltransferase family. In terms of assembly, homotetramer.

It catalyses the reaction alpha-D-glucose 1-phosphate + ATP + H(+) = ADP-alpha-D-glucose + diphosphate. It participates in glycan biosynthesis; glycogen biosynthesis. Functionally, involved in the biosynthesis of ADP-glucose, a building block required for the elongation reactions to produce glycogen. Catalyzes the reaction between ATP and alpha-D-glucose 1-phosphate (G1P) to produce pyrophosphate and ADP-Glc. This chain is Glucose-1-phosphate adenylyltransferase, found in Agrobacterium fabrum (strain C58 / ATCC 33970) (Agrobacterium tumefaciens (strain C58)).